A 274-amino-acid polypeptide reads, in one-letter code: 2,3,4,5-tetrahydropyridine-2,6-dicarboxylate N-succinyltransferase (274 aa).

It belongs to the transferase hexapeptide repeat family.

It is found in the cytoplasm. The catalysed reaction is (S)-2,3,4,5-tetrahydrodipicolinate + succinyl-CoA + H2O = (S)-2-succinylamino-6-oxoheptanedioate + CoA. It functions in the pathway amino-acid biosynthesis; L-lysine biosynthesis via DAP pathway; LL-2,6-diaminopimelate from (S)-tetrahydrodipicolinate (succinylase route): step 1/3. This Salmonella heidelberg (strain SL476) protein is 2,3,4,5-tetrahydropyridine-2,6-dicarboxylate N-succinyltransferase.